Here is a 957-residue protein sequence, read N- to C-terminus: SH3 domain-binding protein 4 (957 aa).

Residues 54–113 (DNVKEVVAIKDYCPNNFTTLKFSKGEHLYVLDTSGGEWWYAHNTTEMGYIPSSYVQPLNY) form the SH3 1 domain. The 138-residue stretch at 312 to 449 (TSIVCRLDSS…LEPVMYVVMV (138 aa)) folds into the ZU5 domain. One can recognise an SH3 2 domain in the interval 649-719 (TSLKYGKLLK…HAKNVLVVGK (71 aa)).

In terms of assembly, homodimer or homooligomer.

The protein resides in the membrane. It is found in the clathrin-coated pit. The protein localises to the cytoplasmic vesicle. It localises to the clathrin-coated vesicle. Its subcellular location is the nucleus. Functionally, possible role in regulating endocytosis of the transferrin receptor at the plasma membrane. Alternatively, may function as a negative regulator of the amino acid-induced TOR signaling by inhibiting the formation of active Rag GTPase complexes. Preferentially binds inactive Rag GTPase complexes and prevents their interaction with the mTORC1 complex inhibiting its relocalization to lysosomes and its activation. Thereby, may indirectly regulate cell growth, proliferation and autophagy. The protein is SH3 domain-binding protein 4 (sh3bp4) of Xenopus tropicalis (Western clawed frog).